A 1365-amino-acid polypeptide reads, in one-letter code: Serine-aspartate repeat-containing protein D (1365 aa).

The first 35 residues, 1–35 (MLNRENKTAITRKGMVSNRLNKFSIRKYTVGTASI), serve as a signal peptide directing secretion. Positions 23–34 (FSIRKYTVGTAS) match the YSIRK-G/S signaling motif motif. The interval 36–568 (LVGTTLIFGL…NNQSGGAGQE (533 aa)) is ligand binding A region. The segment at 54–185 (ESTNKELNEA…NKKVDAKTES (132 aa)) is disordered. 2 stretches are compositionally biased toward polar residues: residues 62-71 (EATTSASDNQ) and 94-109 (EMVS…NGNK). The segment covering 130 to 145 (KSDEQASPKSTNEDLN) has biased composition (basic and acidic residues). Composition is skewed to polar residues over residues 146 to 155 (TKQTISNQEA) and 163 to 173 (NKSVVNAQPTN). Positions 174 to 183 (EENKKVDAKT) are enriched in basic and acidic residues. CNA-B domains follow at residues 569–680 (VYKI…IYKP), 681–791 (KYNL…YKTP), 792–901 (KYNL…FYKP), 902–1012 (TYNL…YKTP), and 1013–1123 (KYSL…EEDT). Disordered stretches follow at residues 857–884 (ETPS…STTG), 972–991 (YTPT…NGLT), and 1078–1341 (EKPA…SNNA). Composition is skewed to polar residues over residues 860–869 (SGYTPTQVGS) and 972–981 (YTPTSVTSGN). Acidic residues-rich tracts occupy residues 1091–1101 (TEDDKDADGGE) and 1118–1304 (YFEE…DSDS). The LPXTG sorting signal signature appears at 1328 to 1332 (LPETG). A Pentaglycyl murein peptidoglycan amidated threonine modification is found at threonine 1331. A propeptide spans 1332 to 1365 (GNENSGSNNATLFGGLFAALGSLLLFGRRKKQNK) (removed by sortase).

This sequence belongs to the serine-aspartate repeat-containing protein (SDr) family. As to quaternary structure, interacts with host DSG1; this interaction increases S.aureus adherence to keratinocytes.

The protein resides in the secreted. The protein localises to the cell wall. Cell surface-associated calcium-binding protein which plays an important role in adhesion and pathogenesis. Mediates interactions with components of the extracellular matrix such as host DSG1 to promote bacterial adhesion to host cells. Contributes to the resistance to killing by innate immune components such as neutrophils present in blood and thus attenuates bacterial clearance. The protein is Serine-aspartate repeat-containing protein D (sdrD) of Staphylococcus aureus (strain MSSA476).